Here is a 430-residue protein sequence, read N- to C-terminus: Adenylosuccinate synthetase (430 aa).

GTP-binding positions include 12 to 18 (GDEGKGK) and 40 to 42 (GHT). Residue D13 is the Proton acceptor of the active site. Positions 13 and 40 each coordinate Mg(2+). IMP is bound by residues 13 to 16 (DEGK), 38 to 41 (NAGH), T128, R142, Q223, T238, and R302. H41 serves as the catalytic Proton donor. 298–304 (TVTKRPR) is a substrate binding site. GTP is bound by residues R304, 330-332 (CVD), and 412-414 (SVG).

This sequence belongs to the adenylosuccinate synthetase family. As to quaternary structure, homodimer. Mg(2+) serves as cofactor.

The protein resides in the cytoplasm. It carries out the reaction IMP + L-aspartate + GTP = N(6)-(1,2-dicarboxyethyl)-AMP + GDP + phosphate + 2 H(+). It participates in purine metabolism; AMP biosynthesis via de novo pathway; AMP from IMP: step 1/2. Functionally, plays an important role in the de novo pathway of purine nucleotide biosynthesis. Catalyzes the first committed step in the biosynthesis of AMP from IMP. The chain is Adenylosuccinate synthetase from Ligilactobacillus salivarius (strain UCC118) (Lactobacillus salivarius).